A 388-amino-acid chain; its full sequence is Quinolone resistance protein NorA (388 aa).

The next 12 helical transmembrane spans lie at 5-25 (IFVL…VIPV), 42-62 (LLVA…GTLA), 69-89 (LIIC…AVGH), 99-119 (VIGG…IADV), 129-149 (FGYM…IGGF), 157-177 (MPFY…VVLI), 201-221 (WKVF…LSAF), 239-259 (DISI…IYFF), 269-289 (LTFI…LVIA), 293-313 (WTIM…RPAI), 331-351 (LNST…GALF), and 355-375 (IEAP…IVLI).

It belongs to the major facilitator superfamily. TCR/Tet family.

It is found in the cell membrane. Involved in quinolone resistance. May constitute a membrane-associated active efflux pump of hydrophilic quinolones. This is Quinolone resistance protein NorA (norA) from Staphylococcus aureus (strain MRSA252).